The sequence spans 891 residues: Valine--tRNA ligase (891 aa).

Positions 43-53 match the 'HIGH' region motif; it reads PFTSGTLHLGH. Positions 536 to 540 match the 'KMSKS' region motif; that stretch reads KMSKS. ATP is bound at residue Lys-539.

The protein belongs to the class-I aminoacyl-tRNA synthetase family. ValS type 2 subfamily.

Its subcellular location is the cytoplasm. The enzyme catalyses tRNA(Val) + L-valine + ATP = L-valyl-tRNA(Val) + AMP + diphosphate. Catalyzes the attachment of valine to tRNA(Val). As ValRS can inadvertently accommodate and process structurally similar amino acids such as threonine, to avoid such errors, it has a 'posttransfer' editing activity that hydrolyzes mischarged Thr-tRNA(Val) in a tRNA-dependent manner. The chain is Valine--tRNA ligase from Pyrococcus abyssi (strain GE5 / Orsay).